The chain runs to 766 residues: DENN domain-containing protein 1B (766 aa).

The region spanning 14 to 143 (DLVLKVKCHA…YNHPVPKANT (130 aa)) is the uDENN domain. The cDENN domain maps to 160–296 (GLPTIPESRN…VVSALKNKLK (137 aa)). Positions 298–375 (QSTATGDGVA…DGRLAKLNAG (78 aa)) constitute a dDENN domain. Residues 378–382 (FSDIF) carry the FXDXF motif motif. Residues 472-523 (NEKGENREKHKLSQTHLKRPHKSLDGTLYDDDDDDDDIERASKISSEDGEET) are disordered. A compositionally biased stretch (basic residues) spans 480-492 (KHKLSQTHLKRPH). Acidic residues predominate over residues 499–509 (LYDDDDDDDDI). Tyrosine 500 carries the phosphotyrosine modification. A phosphoserine mark is found at serine 516, serine 517, serine 530, and serine 533. Positions 547–556 (DLLGEILDTL) match the Clathrin box motif. Disordered stretches follow at residues 611–634 (LGQDDSALHGRQLPPSPRKRVSSG) and 652–732 (LCAD…KPSK). Phosphoserine is present on residues serine 632 and serine 633. Over residues 694 to 704 (TPGQAPLQSED) the composition is skewed to polar residues. Positions 722-732 (KAGKEDTKPSK) are enriched in basic and acidic residues.

Interacts with RAB35. Interacts with clathrin heavy chain/CLTC. Interacts with components of the adapter protein complex 2 (AP-2) AP2A2 and AP2B1. Interacts with CD3E. Phosphorylated on serine and/or threonine, possibly regulating the guanine nucleotide exchange factor (GEF) activity. Expressed in a subset of dendritic cells (DCs).

The protein resides in the cytoplasm. Its subcellular location is the cytosol. It is found in the cytoplasmic vesicle. The protein localises to the clathrin-coated vesicle. Its function is as follows. Guanine nucleotide exchange factor (GEF) for RAB35 that acts as a regulator of T-cell receptor (TCR) internalization in TH2 cells. Acts by promoting the exchange of GDP to GTP, converting inactive GDP-bound RAB35 into its active GTP-bound form. Plays a role in clathrin-mediated endocytosis. Controls cytokine production in TH2 lymphocytes by controlling the rate of TCR internalization and routing to endosomes: acts by mediating clathrin-mediated endocytosis of TCR via its interaction with the adapter protein complex 2 (AP-2) and GEF activity. Dysregulation leads to impaired TCR down-modulation and recycling, affecting cytokine production in TH2 cells. The protein is DENN domain-containing protein 1B of Mus musculus (Mouse).